The sequence spans 317 residues: Melanocyte-stimulating hormone receptor (317 aa).

The Extracellular segment spans residues 1 to 37 (MPMQGAQKRLLGSLNSTPTATPNLGLAANHTGAPCLE). N-linked (GlcNAc...) asparagine glycosylation is present at asparagine 29. The chain crosses the membrane as a helical span at residues 38-63 (VSIPDGLFLSLGLVSLVENVLVVAAI). Topologically, residues 64-72 (AKNRNLHSP) are cytoplasmic. A helical membrane pass occupies residues 73–93 (MYCFICCLALSDLLVSSSNML). The Extracellular portion of the chain corresponds to 94–118 (ETAVILLLEAGALATRASVVQQLQN). Residues 119–140 (TIDVLTCSSMLCSLCFLGAIAV) form a helical membrane-spanning segment. The Cytoplasmic segment spans residues 141-163 (DRHVSIFYALRYHSIMTLARARR). The chain crosses the membrane as a helical span at residues 164–183 (AIAAIWVASVLSSTLFIAYC). At 184-191 (DHAXVLLC) the chain is on the extracellular side. Residues 192-211 (LVVFFLAMLVLMAVLYVHML) form a helical membrane-spanning segment. Over 212-240 (ARACQHAQGITRLHQRQPPAHQGFGFRGA) the chain is Cytoplasmic. Residues 241–266 (ATLTILLGIFFLCWGPFFLHLTLVVL) traverse the membrane as a helical segment. The Extracellular portion of the chain corresponds to 267–279 (CPQHLTCSCIFKN). The helical transmembrane segment at 280–300 (FKVFLTLIICSTIIDPLIYAF) threads the bilayer. At 301–317 (RSQELRRTLKELLLCSW) the chain is on the cytoplasmic side. Residue cysteine 315 is the site of S-palmitoyl cysteine attachment.

This sequence belongs to the G-protein coupled receptor 1 family. In terms of assembly, interacts with MGRN1, but does not undergo MGRN1-mediated ubiquitination; this interaction competes with GNAS-binding and thus inhibits agonist-induced cAMP production. Interacts with OPN3; the interaction results in a decrease in MC1R-mediated cAMP signaling and ultimately a decrease in melanin production in melanocytes.

The protein localises to the cell membrane. In terms of biological role, receptor for MSH (alpha, beta and gamma) and ACTH. The activity of this receptor is mediated by G proteins which activate adenylate cyclase. Mediates melanogenesis, the production of eumelanin (black/brown) and phaeomelanin (red/yellow), via regulation of cAMP signaling in melanocytes. In Ateles paniscus (Black spider monkey), this protein is Melanocyte-stimulating hormone receptor (MC1R).